A 63-amino-acid polypeptide reads, in one-letter code: Large ribosomal subunit protein uL30 (63 aa).

The protein belongs to the universal ribosomal protein uL30 family. Part of the 50S ribosomal subunit.

The protein is Large ribosomal subunit protein uL30 of Xylella fastidiosa (strain M23).